Here is a 1137-residue protein sequence, read N- to C-terminus: Guanine nucleotide exchange factor DBS (1137 aa).

Residues 52–224 (TAMATDEIMH…DLGGTLDYCH (173 aa)) form the CRAL-TRIO domain. The Spectrin repeat unit spans residues 351–456 (LQLRHFEQGF…IARRRGLLSK (106 aa)). Phosphoserine occurs at positions 457 and 480. Positions 503–529 (LETGAENKIQELNAIYKEYESILNQDL) form a coiled coil. A disordered region spans residues 557-625 (LAARQTRPVQ…QGRGSAGEEE (69 aa)). The segment covering 584–597 (GIRRGSENSSSEGG) has biased composition (low complexity). Basic and acidic residues predominate over residues 607–616 (AKSEMSESRQ). Position 620 is a phosphoserine (S620). The 181-residue stretch at 631–811 (LRRHVMSELL…LGILKAVNDS (181 aa)) folds into the DH domain. A PH domain is found at 829 to 945 (KLLMQGSFSV…WVNEIRKVLT (117 aa)). Disordered regions lie at residues 955–1058 (SQHR…LVPG) and 1116–1137 (GPSG…RAHP). Low complexity predominate over residues 962-977 (QSQSLPLPAPTSTSPS). A phosphoserine mark is found at S1033, S1034, S1041, and S1042. One can recognise an SH3 domain in the interval 1055–1116 (LVPGKYTVVA…PASSLSVRLG (62 aa)). The segment covering 1119–1128 (GSAQCLSSSG) has biased composition (polar residues).

The protein belongs to the MCF2 family. In terms of assembly, interacts with GTP-bound RAC1. Interacts with CDC42. Interacts with RHOA. Interacts with CCPG1, which results in specific inhibition of its exchange activity toward RHOA, but does not affect its activity on CDC42.

It is found in the cytoplasm. The protein resides in the cell membrane. The protein localises to the endomembrane system. Its function is as follows. Guanine nucleotide exchange factor that catalyzes guanine nucleotide exchange on RHOA and CDC42, and thereby contributes to the regulation of RHOA and CDC42 signaling pathways. Seems to lack activity with RAC1. Becomes activated and highly tumorigenic by truncation of the N-terminus. Isoform 5 activates CDC42. Does not catalyze guanine nucleotide exchange on CDC42. This Homo sapiens (Human) protein is Guanine nucleotide exchange factor DBS (MCF2L).